A 151-amino-acid polypeptide reads, in one-letter code: 6,7-dimethyl-8-ribityllumazine synthase (151 aa).

5-amino-6-(D-ribitylamino)uracil-binding positions include Phe-15, 49-51 (AVE), and 73-75 (AVI). Residue 78–79 (ET) participates in (2S)-2-hydroxy-3-oxobutyl phosphate binding. His-81 acts as the Proton donor in catalysis. Phe-106 is a 5-amino-6-(D-ribitylamino)uracil binding site. Arg-120 contacts (2S)-2-hydroxy-3-oxobutyl phosphate.

This sequence belongs to the DMRL synthase family. In terms of assembly, forms an icosahedral capsid composed of 60 subunits, arranged as a dodecamer of pentamers.

The enzyme catalyses (2S)-2-hydroxy-3-oxobutyl phosphate + 5-amino-6-(D-ribitylamino)uracil = 6,7-dimethyl-8-(1-D-ribityl)lumazine + phosphate + 2 H2O + H(+). Its pathway is cofactor biosynthesis; riboflavin biosynthesis; riboflavin from 2-hydroxy-3-oxobutyl phosphate and 5-amino-6-(D-ribitylamino)uracil: step 1/2. Functionally, catalyzes the formation of 6,7-dimethyl-8-ribityllumazine by condensation of 5-amino-6-(D-ribitylamino)uracil with 3,4-dihydroxy-2-butanone 4-phosphate. This is the penultimate step in the biosynthesis of riboflavin. The protein is 6,7-dimethyl-8-ribityllumazine synthase of Coxiella burnetii (strain Dugway 5J108-111).